The primary structure comprises 174 residues: MQTQKGGRPTILPKMYEEPLFSQIIDKIESGCNDREIYTSLHCSAKTFRKWRDDNIKAYDEAKGIARGNLLELAESALASKLTVRTLKETETIYDADGNVEKVKVKEKELDKDSLVAMMVAKAGNPELYNPTEWRRLQQEESSAHDLKAKIEELDDYKLSKYKTPEIEVPEGFE.

Belongs to the skunalikevirus terminase small subunit family.

Probable terminase small subunit. The terminase lies at a unique vertex of the procapsid and is composed of two subunits, a small terminase subunit and a large terminase subunit. Both terminase subunits heterooligomerize and are docked on the portal protein to form the packaging machine. Once the capsid is packaged with the DNA, the terminase complex is substituted by the connector proteins gp15. In Lactococcus lactis (Lactococcus lactis bacteriophage SK1), this protein is Terminase small subunit.